The primary structure comprises 291 residues: ATP synthase gamma chain (291 aa).

The protein belongs to the ATPase gamma chain family. In terms of assembly, F-type ATPases have 2 components, CF(1) - the catalytic core - and CF(0) - the membrane proton channel. CF(1) has five subunits: alpha(3), beta(3), gamma(1), delta(1), epsilon(1). CF(0) has three main subunits: a, b and c.

It localises to the cell inner membrane. Its function is as follows. Produces ATP from ADP in the presence of a proton gradient across the membrane. The gamma chain is believed to be important in regulating ATPase activity and the flow of protons through the CF(0) complex. This Methylobacillus flagellatus (strain ATCC 51484 / DSM 6875 / VKM B-1610 / KT) protein is ATP synthase gamma chain.